Consider the following 156-residue polypeptide: Small ribosomal subunit protein uS7c (156 aa).

This sequence belongs to the universal ribosomal protein uS7 family. Part of the 30S ribosomal subunit.

It localises to the plastid. The protein resides in the chloroplast. One of the primary rRNA binding proteins, it binds directly to 16S rRNA where it nucleates assembly of the head domain of the 30S subunit. This Chlorella vulgaris (Green alga) protein is Small ribosomal subunit protein uS7c (rps7).